A 523-amino-acid chain; its full sequence is GMP synthase [glutamine-hydrolyzing] (523 aa).

The 198-residue stretch at 8 to 205 (KILILDFGSQ…VVDICGCETN (198 aa)) folds into the Glutamine amidotransferase type-1 domain. The Nucleophile role is filled by Cys-85. Catalysis depends on residues His-179 and Glu-181. The GMPS ATP-PPase domain maps to 206–398 (WTAENIIEDA…LGLPAEMLNR (193 aa)). 233 to 239 (SGGVDSS) lines the ATP pocket.

In terms of assembly, homodimer.

It catalyses the reaction XMP + L-glutamine + ATP + H2O = GMP + L-glutamate + AMP + diphosphate + 2 H(+). The protein operates within purine metabolism; GMP biosynthesis; GMP from XMP (L-Gln route): step 1/1. In terms of biological role, catalyzes the synthesis of GMP from XMP. The chain is GMP synthase [glutamine-hydrolyzing] from Histophilus somni (strain 129Pt) (Haemophilus somnus).